We begin with the raw amino-acid sequence, 156 residues long: Endoribonuclease YbeY (156 aa).

Positions 105, 109, and 115 each coordinate Zn(2+).

Belongs to the endoribonuclease YbeY family. Requires Zn(2+) as cofactor.

It is found in the cytoplasm. Single strand-specific metallo-endoribonuclease involved in late-stage 70S ribosome quality control and in maturation of the 3' terminus of the 16S rRNA. The polypeptide is Endoribonuclease YbeY (Chlorobium chlorochromatii (strain CaD3)).